A 471-amino-acid polypeptide reads, in one-letter code: COP9 signalosome complex subunit 1 (471 aa).

The PCI domain occupies 249-411 (CFLLASFDHC…KILYARDVDQ (163 aa)). A disordered region spans residues 445 to 471 (HVKSPPREGSQGELTPANSQSRMSTNM). A phosphoserine mark is found at serine 448 and serine 454. Over residues 456–471 (GELTPANSQSRMSTNM) the composition is skewed to polar residues. Threonine 459 bears the Phosphothreonine mark. Residue serine 463 is modified to Phosphoserine.

Belongs to the CSN1 family. Component of the CSN complex, composed of COPS1/GPS1, COPS2, COPS3, COPS4, COPS5, COPS6, COPS7 (COPS7A or COPS7B), COPS8 and COPS9. In the complex, it probably interacts directly with COPS2, COPS3, COPS4 and COPS5. Interacts directly with inositol kinase ITPK1. Interacts with CAPN8. Interacts with USP48. Interacts with ASB4; this interaction negatively regulates GPS1. In terms of tissue distribution, expressed in the base region of the oxyntic and pyloric mucosae.

It localises to the cytoplasm. It is found in the nucleus. Essential component of the COP9 signalosome complex (CSN), a complex involved in various cellular and developmental processes. The CSN complex is an essential regulator of the ubiquitin (Ubl) conjugation pathway by mediating the deneddylation of the cullin subunits of SCF-type E3 ligase complexes, leading to decrease the Ubl ligase activity of SCF-type complexes such as SCF, CSA or DDB2. The complex is also involved in phosphorylation of p53/TP53, c-jun/JUN, IkappaBalpha/NFKBIA, ITPK1 and IRF8/ICSBP, possibly via its association with CK2 and PKD kinases. CSN-dependent phosphorylation of TP53 and JUN promotes and protects degradation by the Ubl system, respectively. Suppresses G-protein- and mitogen-activated protein kinase-mediated signal transduction. This is COP9 signalosome complex subunit 1 (Gps1) from Mus musculus (Mouse).